The chain runs to 501 residues: E3 ubiquitin-protein ligase TRIM35 (501 aa).

Residue M1 is modified to N-acetylmethionine. S8 carries the post-translational modification Phosphoserine. An RING-type zinc finger spans residues 21–61; it reads CAVCYDPFRDAVTLRCGHNFCRRCVSGCWEVQTTPSCPVCK. A B box-type zinc finger spans residues 96–137; that stretch reads RSPRPCRAHRAPLTLFCVEDKELLCCACQADARHQEHRVQPI. The Zn(2+) site is built by C101, H104, C123, and H129. A coiled-coil region spans residues 209–252; that stretch reads MKEESRKKHLLAEEKMKQLAEQTEALAREIERLQMEMKEDDMTF. Positions 284-495 constitute a B30.2/SPRY domain; the sequence is LESLQYRVWK…LRICHLRVSI (212 aa).

Interacts with PKM isoform M2, but not isoform M1; this interaction may compete with that between PKM and FGFR1, and hence reduces FGFR1-dependent tyrosine phosphorylation of PKM. Interacts with IRF7; this interaction promotes IRF7 proteasomal degradation. Interacts with TRAF3; this interaction promotes TRAF3 activation.

The protein localises to the cytoplasm. Its subcellular location is the nucleus. It carries out the reaction S-ubiquitinyl-[E2 ubiquitin-conjugating enzyme]-L-cysteine + [acceptor protein]-L-lysine = [E2 ubiquitin-conjugating enzyme]-L-cysteine + N(6)-ubiquitinyl-[acceptor protein]-L-lysine.. It functions in the pathway protein modification; protein ubiquitination. Functionally, E3 ubiquitin-protein ligase that participates in multiple biological processes including cell death, glucose metabolism, and in particular, the innate immune response. Mediates 'Lys-63'-linked polyubiquitination of TRAF3 thereby promoting type I interferon production via RIG-I signaling pathway. Can also catalyze 'Lys-48'-linked polyubiquitination and proteasomal degradation of viral proteins such as influenza virus PB2. Acts as a negative feedback regulator of TLR7- and TLR9-triggered signaling. Mechanistically, promotes the 'Lys-48'-linked ubiquitination of IRF7 and induces its degradation via a proteasome-dependent pathway. Reduces FGFR1-dependent tyrosine phosphorylation of PKM, inhibiting PKM-dependent lactate production, glucose metabolism, and cell growth. This chain is E3 ubiquitin-protein ligase TRIM35 (Trim35), found in Rattus norvegicus (Rat).